The following is a 341-amino-acid chain: Spindolin (341 aa).

Positions 1–20 (MNKLILISLIASLYQVEVDA) are cleaved as a signal peptide.

Homodimer; disulfide-linked.

Its function is as follows. This protein is a spindle body protein. The chain is Spindolin (SPH) from Choristoneura biennis entomopoxvirus (CbEPV).